The chain runs to 357 residues: Transcription factor HHO1 (357 aa).

2 disordered regions span residues Thr94–Ile117 and Asn171–Arg198. Positions Ile96 to Glu109 are enriched in acidic residues. Positions Asn171–Asp182 are enriched in polar residues. An HTH myb-type domain is found at Gly193–Arg253. Residues Pro224–Arg249 constitute a DNA-binding region (H-T-H motif).

It localises to the nucleus. In terms of biological role, probable factor involved in nitrate and phosphate signaling in roots. Integrates nitrate and phosphate starvation responses and adaptation of root architecture, depending on nutrient availabilities. Acts downstream of the nitrate sensor and transporter NPF6.3/NRT1.1. Represses primary root development in response to phosphate deficiency conditions, only when nitrate is present. This Arabidopsis thaliana (Mouse-ear cress) protein is Transcription factor HHO1.